The primary structure comprises 189 residues: Dual specificity phosphatase 21 (189 aa).

The 142-residue stretch at 20-161 (GLSQITASLF…LIHYEFKLFS (142 aa)) folds into the Tyrosine-protein phosphatase domain. The interval 43–128 (SNNHITTIIN…YLMKYHNMTL (86 aa)) is sufficient for mitochondrial localization. The active-site Phosphocysteine intermediate is Cys105.

This sequence belongs to the protein-tyrosine phosphatase family. Non-receptor class dual specificity subfamily. As to quaternary structure, microtubule inner protein component of sperm flagellar doublet microtubules. In terms of tissue distribution, selectively expressed in testis.

Its subcellular location is the cytoplasm. The protein localises to the nucleus. It localises to the mitochondrion inner membrane. The protein resides in the cytoskeleton. It is found in the flagellum axoneme. The enzyme catalyses O-phospho-L-tyrosyl-[protein] + H2O = L-tyrosyl-[protein] + phosphate. It catalyses the reaction O-phospho-L-seryl-[protein] + H2O = L-seryl-[protein] + phosphate. It carries out the reaction O-phospho-L-threonyl-[protein] + H2O = L-threonyl-[protein] + phosphate. Protein phosphatase component of the sperm flagellar doublet microtubules. May act as a regulator of sperm motility by mediating dephosphorylation of sperm doublet microtubule proteins. Can dephosphorylate single and diphosphorylated synthetic MAPK peptides, with preference for the phosphotyrosine and diphosphorylated forms over phosphothreonine. This chain is Dual specificity phosphatase 21, found in Mus musculus (Mouse).